Here is a 319-residue protein sequence, read N- to C-terminus: Cell division protein PomZ (319 aa).

61–68 (KGGTGKTS) provides a ligand contact to ATP.

It belongs to the ParA family. Interacts with FtsZ in pull-down experiments.

The protein resides in the cytoplasm. Functionally, spatial regulator of cell division that is involved in identifying the incipient division site, recruiting FtsZ to the division site and stabilizing the Z-ring. Binds ATP and GTP. This chain is Cell division protein PomZ, found in Myxococcus xanthus (strain DK1622).